The following is a 246-amino-acid chain: Bis(5'-nucleosyl)-tetraphosphatase PrpE [asymmetrical] (246 aa).

The protein belongs to the PrpE family. The cofactor is Ni(2+).

It catalyses the reaction P(1),P(4)-bis(5'-guanosyl) tetraphosphate + H2O = GMP + GTP + 2 H(+). Asymmetrically hydrolyzes Ap4p to yield AMP and ATP. The sequence is that of Bis(5'-nucleosyl)-tetraphosphatase PrpE [asymmetrical] from Bacillus mycoides (strain KBAB4) (Bacillus weihenstephanensis).